Consider the following 302-residue polypeptide: Bifunctional protein FolD 2 (302 aa).

NADP(+) contacts are provided by residues 170-172 (GRS), serine 195, and isoleucine 236.

It belongs to the tetrahydrofolate dehydrogenase/cyclohydrolase family. In terms of assembly, homodimer.

It carries out the reaction (6R)-5,10-methylene-5,6,7,8-tetrahydrofolate + NADP(+) = (6R)-5,10-methenyltetrahydrofolate + NADPH. The catalysed reaction is (6R)-5,10-methenyltetrahydrofolate + H2O = (6R)-10-formyltetrahydrofolate + H(+). It functions in the pathway one-carbon metabolism; tetrahydrofolate interconversion. Functionally, catalyzes the oxidation of 5,10-methylenetetrahydrofolate to 5,10-methenyltetrahydrofolate and then the hydrolysis of 5,10-methenyltetrahydrofolate to 10-formyltetrahydrofolate. This Paracoccus denitrificans (strain Pd 1222) protein is Bifunctional protein FolD 2.